Consider the following 122-residue polypeptide: Small ribosomal subunit protein uS13 (122 aa).

The interval 97–122 (PVRGQRTHTNARTRKGPAKAIAGKKK) is disordered.

It belongs to the universal ribosomal protein uS13 family. In terms of assembly, part of the 30S ribosomal subunit. Forms a loose heterodimer with protein S19. Forms two bridges to the 50S subunit in the 70S ribosome.

Its function is as follows. Located at the top of the head of the 30S subunit, it contacts several helices of the 16S rRNA. In the 70S ribosome it contacts the 23S rRNA (bridge B1a) and protein L5 of the 50S subunit (bridge B1b), connecting the 2 subunits; these bridges are implicated in subunit movement. Contacts the tRNAs in the A and P-sites. This is Small ribosomal subunit protein uS13 from Brucella anthropi (strain ATCC 49188 / DSM 6882 / CCUG 24695 / JCM 21032 / LMG 3331 / NBRC 15819 / NCTC 12168 / Alc 37) (Ochrobactrum anthropi).